The following is a 116-amino-acid chain: Ribosome-binding factor A (116 aa).

The protein belongs to the RbfA family. In terms of assembly, monomer. Binds 30S ribosomal subunits, but not 50S ribosomal subunits or 70S ribosomes.

The protein resides in the cytoplasm. In terms of biological role, one of several proteins that assist in the late maturation steps of the functional core of the 30S ribosomal subunit. Associates with free 30S ribosomal subunits (but not with 30S subunits that are part of 70S ribosomes or polysomes). Required for efficient processing of 16S rRNA. May interact with the 5'-terminal helix region of 16S rRNA. The polypeptide is Ribosome-binding factor A (Streptococcus equi subsp. zooepidemicus (strain H70)).